Here is an 89-residue protein sequence, read N- to C-terminus: UPF0213 protein LMOf2365_0181 (89 aa).

The region spanning 5–80 (SEHFFYVLKC…KKLSRKNKDA (76 aa)) is the GIY-YIG domain.

Belongs to the UPF0213 family.

The polypeptide is UPF0213 protein LMOf2365_0181 (Listeria monocytogenes serotype 4b (strain F2365)).